Reading from the N-terminus, the 328-residue chain is Beta-ketoacyl-[acyl-carrier-protein] synthase III (328 aa).

Catalysis depends on residues Cys-113 and His-252. Residues 253–257 form an ACP-binding region; that stretch reads QANLR. The active site involves Asn-282.

This sequence belongs to the thiolase-like superfamily. FabH family. As to quaternary structure, homodimer.

It is found in the cytoplasm. The catalysed reaction is malonyl-[ACP] + acetyl-CoA + H(+) = 3-oxobutanoyl-[ACP] + CO2 + CoA. It functions in the pathway lipid metabolism; fatty acid biosynthesis. Functionally, catalyzes the condensation reaction of fatty acid synthesis by the addition to an acyl acceptor of two carbons from malonyl-ACP. Catalyzes the first condensation reaction which initiates fatty acid synthesis and may therefore play a role in governing the total rate of fatty acid production. Possesses both acetoacetyl-ACP synthase and acetyl transacylase activities. Its substrate specificity determines the biosynthesis of branched-chain and/or straight-chain of fatty acids. The protein is Beta-ketoacyl-[acyl-carrier-protein] synthase III of Campylobacter fetus subsp. fetus (strain 82-40).